We begin with the raw amino-acid sequence, 891 residues long: Mating-type protein A-alpha Z3 (891 aa).

The homeobox; TALE-type DNA-binding region spans 111-189 (EWQENMPPVP…AARIRIGWTH (79 aa)). Positions 331–360 (AAHEKRQQARREQRQAKNERDAAQMREEQR) are enriched in basic and acidic residues. 4 disordered regions span residues 331–592 (AAHE…VNWD), 606–671 (YLDS…ASET), 779–812 (SILS…VEPS), and 836–861 (PKKD…SPDT). Acidic residues-rich tracts occupy residues 369-400 (SSDD…SDSD) and 427-457 (ADDE…EEDT). 2 stretches are compositionally biased toward low complexity: residues 542–559 (PSKT…KSST) and 612–650 (SSRP…SSVS). Over residues 651–660 (TCETVGTDSS) the composition is skewed to polar residues. A compositionally biased stretch (basic and acidic residues) spans 841–850 (RYAERAERRA).

Belongs to the TALE/M-ATYP homeobox family.

Its subcellular location is the nucleus. Specifies A-alpha-3 mating-type. May regulate the expression of genes specific to the homokaryotic cell type. This Schizophyllum commune (Split gill fungus) protein is Mating-type protein A-alpha Z3.